Reading from the N-terminus, the 395-residue chain is ETS-related transcription factor Elf-3 (395 aa).

A PNT domain is found at 69–155 (EPPAVLHLAE…AQLRDLTSSS (87 aa)). Over residues 200 to 240 (ASPYYGSSYGPGAPSPGSSDFSTSGTDTPQSSHSSDSGGSD) the composition is skewed to low complexity. A disordered region spans residues 200-275 (ASPYYGSSYG…HGKRKRGRPR (76 aa)). Positions 246–265 (TDSKVFPRDGFPDYKKGEPK) are enriched in basic and acidic residues. Over residues 266–275 (HGKRKRGRPR) the composition is skewed to basic residues. The ETS DNA-binding region spans 297–379 (THLWEFIRDI…DGRRLVYKFG (83 aa)).

Belongs to the ETS family. Interacts with TBP. Interacts with CREBBP and EP300; these act as transcriptional coactivators of ELF3 and positively modulate its function. Interacts with XRCC5/KU86 and XRCC6/KU70; these inhibit the ability of ELF3 to bind DNA and negatively modulate its transcriptional activity. Associated with CLND7 and POU2F3. Interacts with ZNF768.

It localises to the cytoplasm. The protein localises to the nucleus. Functionally, transcriptional activator that binds and transactivates ETS sequences containing the consensus nucleotide core sequence GGA[AT]. Acts synergistically with POU2F3 to transactivate the SPRR2A promoter and with RUNX1 to transactivate the ANGPT1 promoter. Also transactivates collagenase, CCL20, CLND7, FLG, KRT8, NOS2, PTGS2, SPRR2B, TGFBR2 and TGM3 promoters. Represses KRT4 promoter activity. Involved in mediating vascular inflammation. May play an important role in epithelial cell differentiation and tumorigenesis. May be a critical downstream effector of the ERBB2 signaling pathway. May be associated with mammary gland development and involution. Plays an important role in the regulation of transcription with TATA-less promoters in preimplantation embryos, which is essential in preimplantation development. This is ETS-related transcription factor Elf-3 from Rattus norvegicus (Rat).